A 570-amino-acid chain; its full sequence is Double-stranded RNA-binding protein Staufen homolog 2 (570 aa).

The region spanning 8–75 (TPVCLVNELA…ANKALTESTL (68 aa)) is the DRBM 1 domain. 2 disordered regions span residues 71–94 (TESTLPKPVQKPPKSNVNNNPGSI) and 178–203 (ALQNEPIPEKSPQNGESGKEMDDDKD). Positions 83–94 (PKSNVNNNPGSI) are enriched in polar residues. In terms of domain architecture, DRBM 2 spans 95 to 181 (TPTVELNGLA…AMKALQALQN (87 aa)). At S188 the chain carries Phosphoserine. Over residues 194–203 (SGKEMDDDKD) the composition is skewed to basic and acidic residues. 2 consecutive DRBM domains span residues 207-274 (SEIS…ELKK) and 307-375 (NPIS…QLGY). Short sequence motifs (nuclear localization signal) lie at residues 273–291 (KKLPPLPVVEKPKLFFKKR) and 373–412 (LGYKASTSLQDPLDKTGENKGWSGPKPGFPEPTNNTPKGI). The tract at residues 381 to 413 (LQDPLDKTGENKGWSGPKPGFPEPTNNTPKGIL) is disordered. The tract at residues 381–570 (LQDPLDKTGE…QDCKKSKSAI (190 aa)) is required for dendritic transport. A Phosphoserine modification is found at S395. Phosphothreonine is present on T405. A phosphoserine mark is found at S416, S426, S440, S455, and S492. A disordered region spans residues 545–570 (LREKADNNQAKPASISQDCKKSKSAI). A compositionally biased stretch (polar residues) spans 551–561 (NNQAKPASISQ).

In terms of assembly, interacts with microtubules. Isoform 2 and isoform 3 may also interact with ribosomes, and this association is independent of translation. Identified in a mRNP complex, at least composed of DHX9, DDX3X, ELAVL1, HNRNPU, IGF2BP1, ILF3, PABPC1, PCBP2, PTBP2, STAU1, STAU2, SYNCRIP and YBX1. Interacts with the exportin XPO5. This requires RNA and RAN bound to GTP. Interacts with TRIM71 (via NHL repeats) in an RNA-dependent manner. In terms of tissue distribution, expressed in brain and neurons, where isoform 2 and isoform 3 appear to be the most abundant. Expressed at the neuromuscular junction of the extensor digitorum longus, tibialis anterior and soleus muscles. Expression at neuromuscular junctions is most pronounced in slow-twitch muscle. Also weakly expressed in heart, kidney, ovary and testis.

It localises to the cytoplasm. It is found in the nucleus. Its subcellular location is the nucleolus. The protein resides in the endoplasmic reticulum. In terms of biological role, RNA-binding protein required for the microtubule-dependent transport of neuronal RNA from the cell body to the dendrite. As protein synthesis occurs within the dendrite, the localization of specific mRNAs to dendrites may be a prerequisite for neurite outgrowth and plasticity at sites distant from the cell body. This chain is Double-stranded RNA-binding protein Staufen homolog 2 (Stau2), found in Mus musculus (Mouse).